Here is a 469-residue protein sequence, read N- to C-terminus: Argininosuccinate lyase (469 aa).

Belongs to the lyase 1 family. Argininosuccinate lyase subfamily.

The protein localises to the cytoplasm. It catalyses the reaction 2-(N(omega)-L-arginino)succinate = fumarate + L-arginine. It functions in the pathway amino-acid biosynthesis; L-arginine biosynthesis; L-arginine from L-ornithine and carbamoyl phosphate: step 3/3. The polypeptide is Argininosuccinate lyase (Burkholderia cenocepacia (strain ATCC BAA-245 / DSM 16553 / LMG 16656 / NCTC 13227 / J2315 / CF5610) (Burkholderia cepacia (strain J2315))).